A 90-amino-acid chain; its full sequence is uncharacterized protein (90 aa).

Helical transmembrane passes span 5–27, 40–62, and 67–89; these read FDILTLILTAIYLLIGGGFIIYI, IYLSIGFFLLIIGASLPVLTFVA, and MSVVVVAILMQIAGLSSIFYSIV.

It localises to the cell membrane. This is an uncharacterized protein from Archaeoglobus fulgidus (strain ATCC 49558 / DSM 4304 / JCM 9628 / NBRC 100126 / VC-16).